Consider the following 161-residue polypeptide: uncharacterized protein (161 aa).

4 consecutive transmembrane segments (helical) span residues 22-42 (LFFINVGLAAVAMLVAGVFGH), 43-63 (LTVGMFLGLGLLLGLLNALLV), 89-109 (LAIITILGLIIAYIFRPAGLG), and 110-130 (VVFGLAFFQVLLVATTALPVL). A disordered region spans residues 141–161 (VATYSSNGQTGGSEGRSASDD).

This sequence to M.leprae ML1138.

Its subcellular location is the cell membrane. This is an uncharacterized protein from Mycobacterium bovis (strain ATCC BAA-935 / AF2122/97).